We begin with the raw amino-acid sequence, 444 residues long: MARTTICALATPPGRGGVAVIRVSGPAVPAIARALAGRLPEPRRAVLARFCDAGGDTLDEGLMLYFPAPRSFTGEDVLELQGHGGEVVVDRLLRRLHALGAHPARPGEFSERAFLNGRMDLTQAEAIADLIAADSEASAQAALRSLEGAFGDAVRELVARVTRLRVQVEAAIDFSDEEIDFLADEAVAGQIGALIDQLQALRDKAGQGRVLRDGMQVVLAGPPNAGKSSLLNALTEDDSAIVTEVPGTTRDLLREHLHIDGMPLHVIDTAGLRDDPDRIEAEGIRRARAAMAEADRVLLIQDIREPPIDPAALALPGDIPLTRVYNKVDLSDEAPGPRRAGDEVAIAVSALTGVGLPALRDHLKSVMGYGEAGSHFSARRRHLDALARAADHLALARRALVEEMAGEIAAEELRLVQHNLGEITGEFTSEDLLGEIFSSFCIGK.

Residues Arg22, Glu79, and Arg118 each contribute to the (6S)-5-formyl-5,6,7,8-tetrahydrofolate site. Residues 214–368 form the TrmE-type G domain; that stretch reads GMQVVLAGPP…LRDHLKSVMG (155 aa). Asn224 contacts K(+). GTP is bound by residues 224 to 229, 243 to 249, and 268 to 271; these read NAGKSS, TEVPGTT, and DTAG. Position 228 (Ser228) interacts with Mg(2+). Thr243, Val245, and Thr248 together coordinate K(+). Thr249 provides a ligand contact to Mg(2+). Lys444 lines the (6S)-5-formyl-5,6,7,8-tetrahydrofolate pocket.

This sequence belongs to the TRAFAC class TrmE-Era-EngA-EngB-Septin-like GTPase superfamily. TrmE GTPase family. In terms of assembly, homodimer. Heterotetramer of two MnmE and two MnmG subunits. The cofactor is K(+).

It is found in the cytoplasm. In terms of biological role, exhibits a very high intrinsic GTPase hydrolysis rate. Involved in the addition of a carboxymethylaminomethyl (cmnm) group at the wobble position (U34) of certain tRNAs, forming tRNA-cmnm(5)s(2)U34. The chain is tRNA modification GTPase MnmE from Alkalilimnicola ehrlichii (strain ATCC BAA-1101 / DSM 17681 / MLHE-1).